A 497-amino-acid polypeptide reads, in one-letter code: NAD(P)H-quinone oxidoreductase subunit 2, chloroplastic (497 aa).

A run of 14 helical transmembrane segments spans residues 13-33, 37-57, 76-96, 103-123, 129-149, 164-184, 206-226, 240-260, 274-294, 311-331, 332-352, 373-393, 406-426, and 462-482; these read VILP…LDLI, SAWL…ALVF, FTIS…LIST, GMGL…GLFL, LVTV…LVGY, LLMG…LYGL, IAVW…LSAF, PTPV…ALAT, WHVL…LIAA, AGYL…GMIT, YMVT…LFGL, AFCL…AGFF, GLYL…YYYL, and VGIA…NPII.

Belongs to the complex I subunit 2 family. In terms of assembly, NDH is composed of at least 16 different subunits, 5 of which are encoded in the nucleus.

Its subcellular location is the plastid. It localises to the chloroplast thylakoid membrane. It carries out the reaction a plastoquinone + NADH + (n+1) H(+)(in) = a plastoquinol + NAD(+) + n H(+)(out). The catalysed reaction is a plastoquinone + NADPH + (n+1) H(+)(in) = a plastoquinol + NADP(+) + n H(+)(out). Its function is as follows. NDH shuttles electrons from NAD(P)H:plastoquinone, via FMN and iron-sulfur (Fe-S) centers, to quinones in the photosynthetic chain and possibly in a chloroplast respiratory chain. The immediate electron acceptor for the enzyme in this species is believed to be plastoquinone. Couples the redox reaction to proton translocation, and thus conserves the redox energy in a proton gradient. This is NAD(P)H-quinone oxidoreductase subunit 2, chloroplastic from Zygnema circumcarinatum (Green alga).